Consider the following 234-residue polypeptide: UPF0173 metal-dependent hydrolase RL2074 (234 aa).

Belongs to the UPF0173 family.

The protein is UPF0173 metal-dependent hydrolase RL2074 of Rhizobium johnstonii (strain DSM 114642 / LMG 32736 / 3841) (Rhizobium leguminosarum bv. viciae).